The primary structure comprises 123 residues: Phosphoribosyl-AMP cyclohydrolase (123 aa).

Residue aspartate 76 participates in Mg(2+) binding. Residue cysteine 77 participates in Zn(2+) binding. Mg(2+)-binding residues include aspartate 78 and aspartate 80. Zn(2+)-binding residues include cysteine 93 and cysteine 100.

The protein belongs to the PRA-CH family. As to quaternary structure, homodimer. It depends on Mg(2+) as a cofactor. Zn(2+) is required as a cofactor.

It is found in the cytoplasm. It carries out the reaction 1-(5-phospho-beta-D-ribosyl)-5'-AMP + H2O = 1-(5-phospho-beta-D-ribosyl)-5-[(5-phospho-beta-D-ribosylamino)methylideneamino]imidazole-4-carboxamide. It participates in amino-acid biosynthesis; L-histidine biosynthesis; L-histidine from 5-phospho-alpha-D-ribose 1-diphosphate: step 3/9. In terms of biological role, catalyzes the hydrolysis of the adenine ring of phosphoribosyl-AMP. This Methanocorpusculum labreanum (strain ATCC 43576 / DSM 4855 / Z) protein is Phosphoribosyl-AMP cyclohydrolase.